Here is a 215-residue protein sequence, read N- to C-terminus: Triosephosphate isomerase (215 aa).

His-82 serves as the catalytic Electrophile. Glu-153 serves as the catalytic Proton acceptor.

Belongs to the triosephosphate isomerase family. Homodimer.

It carries out the reaction D-glyceraldehyde 3-phosphate = dihydroxyacetone phosphate. It participates in carbohydrate biosynthesis; gluconeogenesis. The protein operates within carbohydrate degradation; glycolysis; D-glyceraldehyde 3-phosphate from glycerone phosphate: step 1/1. The polypeptide is Triosephosphate isomerase (Tpi) (Heliothis virescens (Tobacco budworm moth)).